Here is a 198-residue protein sequence, read N- to C-terminus: MHYPEPITKLMDSFMKLPGIGPKSAARLAFYVLDMKEDDVLDFAKALVDAKRNLSFCSVCGHITDKDPCYICSDTSRDRSVLCVVQESKDVIAMEKMRDFHGLYHVLHGTISPMDGIGPEDINIPDLLKRLQDDTIEEVILATNPNVEGEATAMYISRLLRPSGIKVTRIAHGLPVGGDLEYADEVTLSKAMEGRREV.

A C4-type zinc finger spans residues 57-72; sequence CSVCGHITDKDPCYIC. Residues 80 to 175 form the Toprim domain; that stretch reads SVLCVVQESK…KVTRIAHGLP (96 aa).

The protein belongs to the RecR family.

Functionally, may play a role in DNA repair. It seems to be involved in an RecBC-independent recombinational process of DNA repair. It may act with RecF and RecO. This chain is Recombination protein RecR, found in Listeria innocua serovar 6a (strain ATCC BAA-680 / CLIP 11262).